The sequence spans 344 residues: MENREVFVYIVISIFRSLQFLFWRFRPRYNDVTSALTRPLTSAASYDFKFMSYMVNKAKSVNKALEEAVPLREPELKIREAMRYTLLSDGKRVRPMLCLAACELVGGQESTAMSAACAIEMLHASSLILDDLPCMDNDSLRRGKPTNHIVFGESIAILASQALIALAVQKTTSSTFADVPPERILKTVQEMVKAVEGLVAGQQADLAGEGMRFDSDTGLEHLEFIHIHKTAALLEAAAVMGAIMGGGSDEEIERLRSYARCIGLMFQVVDDVLDVTKSSEELGKTAGKDLIAGKLTYPRLMGVEKSKEYAERLNIEAREHLLGFDIDKVAPLVSLADYIVNRQN.

The transit peptide at 1–40 (MENREVFVYIVISIFRSLQFLFWRFRPRYNDVTSALTRPL) directs the protein to the mitochondrion. Residues Lys-91, Arg-94, and His-123 each coordinate isopentenyl diphosphate. Residues Asp-130 and Asp-136 each contribute to the Mg(2+) site. Residue Arg-141 coordinates dimethylallyl diphosphate. Arg-142 lines the isopentenyl diphosphate pocket. The dimethylallyl diphosphate site is built by Lys-229, Thr-230, Gln-267, Lys-284, and Lys-294.

It belongs to the FPP/GGPP synthase family. As to quaternary structure, monomer. The cofactor is Mg(2+).

It localises to the mitochondrion. The catalysed reaction is isopentenyl diphosphate + dimethylallyl diphosphate = (2E)-geranyl diphosphate + diphosphate. The enzyme catalyses isopentenyl diphosphate + (2E)-geranyl diphosphate = (2E,6E)-farnesyl diphosphate + diphosphate. It catalyses the reaction isopentenyl diphosphate + (2E,6E)-farnesyl diphosphate = (2E,6E,10E)-geranylgeranyl diphosphate + diphosphate. The protein operates within isoprenoid biosynthesis; farnesyl diphosphate biosynthesis; farnesyl diphosphate from geranyl diphosphate and isopentenyl diphosphate: step 1/1. It participates in isoprenoid biosynthesis; geranyl diphosphate biosynthesis; geranyl diphosphate from dimethylallyl diphosphate and isopentenyl diphosphate: step 1/1. It functions in the pathway isoprenoid biosynthesis; geranylgeranyl diphosphate biosynthesis; geranylgeranyl diphosphate from farnesyl diphosphate and isopentenyl diphosphate: step 1/1. In terms of biological role, catalyzes the trans-addition of the three molecules of IPP onto DMAPP to form geranylgeranyl pyrophosphate. The protein is Geranylgeranyl pyrophosphate synthase 10, mitochondrial of Arabidopsis thaliana (Mouse-ear cress).